A 150-amino-acid chain; its full sequence is Transcriptional regulator MraZ (150 aa).

2 consecutive SpoVT-AbrB domains span residues 7-55 (SHAI…PEPE) and 84-127 (AALM…SEES).

The protein belongs to the MraZ family. In terms of assembly, forms oligomers.

It localises to the cytoplasm. The protein localises to the nucleoid. The chain is Transcriptional regulator MraZ from Marinobacter nauticus (strain ATCC 700491 / DSM 11845 / VT8) (Marinobacter aquaeolei).